Consider the following 1233-residue polypeptide: Rho guanine nucleotide exchange factor 10-like protein (1233 aa).

Pro residues predominate over residues 1 to 10 (MASSNPPPQP). Positions 1-93 (MASSNPPPQP…GTGVPAWVSN (93 aa)) are disordered. Acidic residues predominate over residues 26-46 (EAEDDPGEAFEFDDSDDEEDT). Ser40 is subject to Phosphoserine. Residues 72-89 (PVTDPDPAAAPPGTGVPA) show a composition bias toward low complexity. Residues Tyr131 and Tyr152 each carry the phosphotyrosine modification. Positions 159–193 (GAPRQAEDLGWSSSEFESYSEDSGEEAKPEVEPAK) are disordered. Residues 183 to 193 (EEAKPEVEPAK) are compositionally biased toward basic and acidic residues. Ser240 is subject to Phosphoserine. Residues 275 to 462 (VRRHILGSIV…ETLAEKLNEQ (188 aa)) form the DH domain. Residues 1089 to 1104 (QEEAEGPRAEEEKPDG) show a composition bias toward basic and acidic residues. 2 disordered regions span residues 1089-1117 (QEEA…HVGR) and 1140-1161 (PLLS…SEED).

Interacts with RHOA, RHOB and RHOC.

It localises to the cytoplasm. Functionally, acts as a guanine nucleotide exchange factor (GEF) for RHOA, RHOB and RHOC. The chain is Rho guanine nucleotide exchange factor 10-like protein (ARHGEF10L) from Pongo abelii (Sumatran orangutan).